We begin with the raw amino-acid sequence, 274 residues long: Beta-lysine N(6)-acetyltransferase (274 aa).

Residues 123 to 274 (FHLKIANETD…DMNFWYKLSE (152 aa)) enclose the N-acetyltransferase domain.

The protein belongs to the acetyltransferase family.

The catalysed reaction is (3S)-3,6-diaminohexanoate + acetyl-CoA = (3S)-6-acetamido-3-aminohexanoate + CoA + H(+). Catalyzes the acetylation of beta-lysine to N6-acetyl-beta-lysine, a compatible solute produced by methanogenic archaea that helps cells to cope with salt stress. The chain is Beta-lysine N(6)-acetyltransferase from Methanococcus maripaludis (strain DSM 14266 / JCM 13030 / NBRC 101832 / S2 / LL).